The following is a 158-amino-acid chain: Dysbindin domain-containing protein 2 (158 aa).

The interval phenylalanine 79 to serine 158 is disordered. Residues proline 106 to serine 131 show a composition bias toward low complexity. Phosphoserine occurs at positions 119 and 120. Residue threonine 137 is modified to Phosphothreonine. Position 142 is a phosphoserine (serine 142). The segment covering serine 142–glycine 151 has biased composition (acidic residues).

It belongs to the dysbindin family. In terms of assembly, monomer. Interacts with CSNK1D and CSNK1E.

Functionally, may modulate the activity of casein kinase-1. Inhibits CSNK1D autophosphorylation (in vitro). This is Dysbindin domain-containing protein 2 (Dbndd2) from Mus musculus (Mouse).